Here is a 208-residue protein sequence, read N- to C-terminus: Thymidylate kinase (208 aa).

10-17 (GPEGSGKT) contacts ATP.

Belongs to the thymidylate kinase family.

It carries out the reaction dTMP + ATP = dTDP + ADP. Its function is as follows. Phosphorylation of dTMP to form dTDP in both de novo and salvage pathways of dTTP synthesis. The chain is Thymidylate kinase from Bacillus mycoides (strain KBAB4) (Bacillus weihenstephanensis).